Reading from the N-terminus, the 313-residue chain is ADP,ATP carrier protein (313 aa).

Solcar repeat units lie at residues 11–104 (PPFV…FKKM), 116–208 (KWMA…IKPV), and 216–302 (NNFL…LQVL). 5 helical membrane passes run 13-40 (FVAD…IKLL), 81-105 (TANV…KKMF), 114-134 (YWKW…TSLL), 184-205 (FGPS…YDSI), and 219-239 (LASF…SYPL). Positions 86 and 98 each coordinate ADP. Position 243 (Arg-243) interacts with ADP. Residues 243–248 (RRRMMM) are important for transport activity. Positions 243–248 (RRRMMM) match the Nucleotide carrier signature motif motif. The helical transmembrane segment at 279 to 299 (AGANILRGVAGAGVLSIYDQL) threads the bilayer.

It belongs to the mitochondrial carrier (TC 2.A.29) family. As to quaternary structure, monomer.

It is found in the mitochondrion inner membrane. The catalysed reaction is ADP(in) + ATP(out) = ADP(out) + ATP(in). With respect to regulation, the matrix-open state (m-state) is inhibited by the membrane-permeable bongkrekic acid (BKA). The cytoplasmic-open state (c-state) is inhibited by the membrane-impermeable toxic inhibitor carboxyatractyloside (CATR). Functionally, ADP:ATP antiporter that mediates import of ADP into the mitochondrial matrix for ATP synthesis, and export of ATP out to fuel the cell. Cycles between the cytoplasmic-open state (c-state) and the matrix-open state (m-state): operates by the alternating access mechanism with a single substrate-binding site intermittently exposed to either the cytosolic (c-state) or matrix (m-state) side of the inner mitochondrial membrane. The protein is ADP,ATP carrier protein (aac) of Neurospora crassa (strain ATCC 24698 / 74-OR23-1A / CBS 708.71 / DSM 1257 / FGSC 987).